A 349-amino-acid chain; its full sequence is Aminomethyltransferase (349 aa).

This sequence belongs to the GcvT family. The glycine cleavage system is composed of four proteins: P, T, L and H.

It catalyses the reaction N(6)-[(R)-S(8)-aminomethyldihydrolipoyl]-L-lysyl-[protein] + (6S)-5,6,7,8-tetrahydrofolate = N(6)-[(R)-dihydrolipoyl]-L-lysyl-[protein] + (6R)-5,10-methylene-5,6,7,8-tetrahydrofolate + NH4(+). Functionally, the glycine cleavage system catalyzes the degradation of glycine. This Thermus thermophilus (strain ATCC 27634 / DSM 579 / HB8) protein is Aminomethyltransferase.